The chain runs to 69 residues: Cytochrome b-c1 complex subunit 6 (69 aa).

Intrachain disulfides connect cysteine 17/cysteine 59 and cysteine 31/cysteine 45.

The protein belongs to the UQCRH/QCR6 family. In terms of assembly, component of the ubiquinol-cytochrome c oxidoreductase (cytochrome b-c1 complex, complex III, CIII), a multisubunit enzyme composed of 3 respiratory subunits cytochrome b, cytochrome c1 and Rieske protein, 2 core protein subunits, and additional low-molecular weight protein subunits. The complex exists as an obligatory dimer and forms supercomplexes (SCs) in the inner mitochondrial membrane with cytochrome c oxidase (complex IV, CIV).

It localises to the mitochondrion inner membrane. Component of the ubiquinol-cytochrome c oxidoreductase, a multisubunit transmembrane complex that is part of the mitochondrial electron transport chain which drives oxidative phosphorylation. The respiratory chain contains 3 multisubunit complexes succinate dehydrogenase (complex II, CII), ubiquinol-cytochrome c oxidoreductase (cytochrome b-c1 complex, complex III, CIII) and cytochrome c oxidase (complex IV, CIV), that cooperate to transfer electrons derived from NADH and succinate to molecular oxygen, creating an electrochemical gradient over the inner membrane that drives transmembrane transport and the ATP synthase. The cytochrome b-c1 complex catalyzes electron transfer from ubiquinol to cytochrome c, linking this redox reaction to translocation of protons across the mitochondrial inner membrane, with protons being carried across the membrane as hydrogens on the quinol. In the process called Q cycle, 2 protons are consumed from the matrix, 4 protons are released into the intermembrane space and 2 electrons are passed to cytochrome c. This chain is Cytochrome b-c1 complex subunit 6, found in Solanum tuberosum (Potato).